Here is a 553-residue protein sequence, read N- to C-terminus: Arginine--tRNA ligase (553 aa).

The 'HIGH' region motif lies at 132–140 (PTGDLHIGH).

This sequence belongs to the class-I aminoacyl-tRNA synthetase family. As to quaternary structure, monomer.

Its subcellular location is the cytoplasm. The enzyme catalyses tRNA(Arg) + L-arginine + ATP = L-arginyl-tRNA(Arg) + AMP + diphosphate. The protein is Arginine--tRNA ligase of Staphylococcus aureus (strain Mu50 / ATCC 700699).